Consider the following 218-residue polypeptide: Octanoyltransferase (218 aa).

The region spanning 30–213 (GEIEDTLILV…YFSEVFNYDI (184 aa)) is the BPL/LPL catalytic domain. Substrate contacts are provided by residues 75-82 (RGGDVTYH), 143-145 (AIG), and 156-158 (GFA). Residue C174 is the Acyl-thioester intermediate of the active site.

This sequence belongs to the LipB family.

The protein resides in the cytoplasm. The enzyme catalyses octanoyl-[ACP] + L-lysyl-[protein] = N(6)-octanoyl-L-lysyl-[protein] + holo-[ACP] + H(+). The protein operates within protein modification; protein lipoylation via endogenous pathway; protein N(6)-(lipoyl)lysine from octanoyl-[acyl-carrier-protein]: step 1/2. In terms of biological role, catalyzes the transfer of endogenously produced octanoic acid from octanoyl-acyl-carrier-protein onto the lipoyl domains of lipoate-dependent enzymes. Lipoyl-ACP can also act as a substrate although octanoyl-ACP is likely to be the physiological substrate. In Alkaliphilus metalliredigens (strain QYMF), this protein is Octanoyltransferase.